A 670-amino-acid polypeptide reads, in one-letter code: Alpha-1,4-glucan:maltose-1-phosphate maltosyltransferase (670 aa).

Positions 262, 322, and 357 each coordinate alpha-maltose 1-phosphate. The Nucleophile role is filled by D393. N394 provides a ligand contact to alpha-maltose 1-phosphate. The active-site Proton donor is the E422. 534 to 535 contacts alpha-maltose 1-phosphate; sequence KY.

Belongs to the glycosyl hydrolase 13 family. GlgE subfamily. In terms of assembly, homodimer.

The catalysed reaction is alpha-maltose 1-phosphate + [(1-&gt;4)-alpha-D-glucosyl](n) = [(1-&gt;4)-alpha-D-glucosyl](n+2) + phosphate. Maltosyltransferase that uses maltose 1-phosphate (M1P) as the sugar donor to elongate linear or branched alpha-(1-&gt;4)-glucans. Is involved in a branched alpha-glucan biosynthetic pathway from trehalose, together with TreS, Mak and GlgB. In Chlorobaculum tepidum (strain ATCC 49652 / DSM 12025 / NBRC 103806 / TLS) (Chlorobium tepidum), this protein is Alpha-1,4-glucan:maltose-1-phosphate maltosyltransferase.